A 121-amino-acid chain; its full sequence is uncharacterized protein (121 aa).

The CHCH domain occupies 43-86 (LKECSSHVAAFADCSKDKYISVVWECRELQQLMKNCLVEYTTSE). 2 short sequence motifs (cx9C motif) span residues 46–56 (CSSHVAAFADC) and 68–78 (CRELQQLMKNC). Intrachain disulfides connect C46-C78 and C56-C68.

This sequence belongs to the CMC family.

This is an uncharacterized protein from Dictyostelium discoideum (Social amoeba).